A 170-amino-acid polypeptide reads, in one-letter code: Acetolactate synthase small subunit (170 aa).

The ACT domain occupies 9–83 (TLSVLVEDKP…NVIKIVEQEE (75 aa)). An Isoglutamyl lysine isopeptide (Lys-Gln) (interchain with Q-Cter in protein Pup) cross-link involves residue lysine 46.

Belongs to the acetolactate synthase small subunit family. Dimer of large and small chains.

The catalysed reaction is 2 pyruvate + H(+) = (2S)-2-acetolactate + CO2. It participates in amino-acid biosynthesis; L-isoleucine biosynthesis; L-isoleucine from 2-oxobutanoate: step 1/4. Its pathway is amino-acid biosynthesis; L-valine biosynthesis; L-valine from pyruvate: step 1/4. The protein is Acetolactate synthase small subunit (ilvH) of Mycolicibacterium smegmatis (strain ATCC 700084 / mc(2)155) (Mycobacterium smegmatis).